We begin with the raw amino-acid sequence, 317 residues long: MLFHAAEKTGHHFTIGAAGVDVFFVISGFIMWVISDRRSVTPVEFIADRARRIVPVYWLATGVMVAGALAGLFPNLVLTLEHVLASLFFVPARSPSSGEIWPVLVQGWTLNFEMLFYAVFAGSLFMPRNWRLPVVSGLFLALVIAGRVVAFDDAVMLTYTRPVILEFVAGMIIGEFWLKGRVPPLAVGSALFACSLGGFALIGVLGLPFDELTTGPLAVLLVIGVLSLEANGCVRALSLPGLLGDASYSIYLWHTFAISVVAKAGLAIGLGAPATMFAAVLSGTLIGIAAYMMLERPLLRRGRARRVTAGLAGRAAE.

The next 7 helical transmembrane spans lie at T14–I34, I53–F73, I100–F120, L132–D152, L185–L205, G206–L226, and I268–I288.

This sequence belongs to the acyltransferase 3 family.

It is found in the cell membrane. Its function is as follows. Required for the acetyl modification of the third sugar (glucose) of the octasaccharide subunit of succinoglycan (EPS I). This is Exopolysaccharide production protein ExoZ (exoZ) from Rhizobium meliloti (strain 1021) (Ensifer meliloti).